Consider the following 137-residue polypeptide: Acidic phospholipase A2 PL-II (137 aa).

The N-terminal stretch at A1 to L17 is a signal peptide. 7 disulfide bridges follow: C28/C89, C44/C136, C46/C62, C61/C117, C68/C110, C78/C103, and C96/C108. Ca(2+) is bound by residues Y45, G47, and G49. The active site involves H65. Position 66 (D66) interacts with Ca(2+). The active site involves D111.

Ca(2+) serves as cofactor. Expressed by the venom gland.

The protein resides in the secreted. The enzyme catalyses a 1,2-diacyl-sn-glycero-3-phosphocholine + H2O = a 1-acyl-sn-glycero-3-phosphocholine + a fatty acid + H(+). Functionally, snake venom phospholipase A2 (PLA2) that may act in the hemostasis system of the prey. Exhibits hydrolytic activities, and prefers the anionic micelles (dPPC with deoxycholate) (54 umol/mg/min) to the zwitterionic micelles (dPPC with Triton X-100) (15 umol/mg/min). PLA2 catalyzes the calcium-dependent hydrolysis of the 2-acyl groups in 3-sn-phosphoglycerides. The chain is Acidic phospholipase A2 PL-II from Walterinnesia aegyptia (Desert black snake).